Reading from the N-terminus, the 407-residue chain is Na(+)-translocating NADH-quinone reductase subunit F (407 aa).

The chain crosses the membrane as a helical span at residues 3–23 (ITLGIAMFTVIVLALAVLILF). The region spanning 32–126 (GDITIEINDD…SMKIELPEEV (95 aa)) is the 2Fe-2S ferredoxin-type domain. [2Fe-2S] cluster contacts are provided by Cys69, Cys75, Cys78, and Cys110. Residues 129–269 (VKKWECTVIS…SGPFGEFFAK (141 aa)) form the FAD-binding FR-type domain.

It belongs to the NqrF family. As to quaternary structure, composed of six subunits; NqrA, NqrB, NqrC, NqrD, NqrE and NqrF. It depends on [2Fe-2S] cluster as a cofactor. The cofactor is FAD.

It localises to the cell inner membrane. The enzyme catalyses a ubiquinone + n Na(+)(in) + NADH + H(+) = a ubiquinol + n Na(+)(out) + NAD(+). In terms of biological role, NQR complex catalyzes the reduction of ubiquinone-1 to ubiquinol by two successive reactions, coupled with the transport of Na(+) ions from the cytoplasm to the periplasm. The first step is catalyzed by NqrF, which accepts electrons from NADH and reduces ubiquinone-1 to ubisemiquinone by a one-electron transfer pathway. This chain is Na(+)-translocating NADH-quinone reductase subunit F, found in Histophilus somni (strain 129Pt) (Haemophilus somnus).